Reading from the N-terminus, the 311-residue chain is Olfactory receptor 8H1 (311 aa).

Over 1-25 the chain is Extracellular; the sequence is MGRRNNTNVPDFILTGLSDSEEVQM. The N-linked (GlcNAc...) asparagine glycan is linked to Asn-5. The helical transmembrane segment at 26-46 threads the bilayer; the sequence is ALFILFLLIYLITMLGNVGMI. The Cytoplasmic portion of the chain corresponds to 47-54; that stretch reads LIIRLDLQ. Residues 55-75 traverse the membrane as a helical segment; sequence LHTPMYFFLTHLSFIDLSYST. Topologically, residues 76 to 98 are extracellular; the sequence is VITPKTLANLLTSNYISFMGCFA. A disulfide bridge connects residues Cys-96 and Cys-188. Residues 99-119 form a helical membrane-spanning segment; that stretch reads QMFFFVFLGAAECFLLSSMAY. Residues 120 to 138 are Cytoplasmic-facing; that stretch reads DRYVAICSPLRYPVIMSKR. A helical membrane pass occupies residues 139 to 159; the sequence is LCCALVTGPYVISFINSFVNV. Over 160–196 the chain is Extracellular; sequence VWMSRLHFCDSNVVRHFFCDTSPILALSCMDTYDIEI. The helical transmembrane segment at 197–216 threads the bilayer; sequence MIHILAGSTLMVSLITISAS. Topologically, residues 217 to 236 are cytoplasmic; sequence YVSILSTILKINSTSGKQKA. The chain crosses the membrane as a helical span at residues 237 to 257; sequence LSTCASHLLGVTIFYGTMIFT. Residues 258–270 lie on the Extracellular side of the membrane; that stretch reads YLKPRKSYSLGRD. The helical transmembrane segment at 271–291 threads the bilayer; the sequence is QVASVFYTIVIPMLNPLIYSL. Residues 292–311 are Cytoplasmic-facing; sequence RNKEVKNALIRVMQRRQDSR.

Belongs to the G-protein coupled receptor 1 family.

It localises to the cell membrane. In terms of biological role, odorant receptor. The polypeptide is Olfactory receptor 8H1 (OR8H1) (Homo sapiens (Human)).